The chain runs to 119 residues: MDYEFLRDLTGQVLVKFSMGHEVIGHWLNEEIKGDLVKLDHIETAADGVRGSERQWQLPGHEYTLWLDGEEVMVRANQLDLDGDEMEEGMNYYDEESLCLCGLEDFLLVLKGYRAFITQ.

Belongs to the UPF0231 family.

The protein is UPF0231 protein YPTB0717 of Yersinia pseudotuberculosis serotype I (strain IP32953).